Here is a 337-residue protein sequence, read N- to C-terminus: tRNA N6-adenosine threonylcarbamoyltransferase (337 aa).

Fe cation contacts are provided by His111 and His115. Residues 134–138 (LVSGG), Asp167, Gly180, and Asn272 contribute to the substrate site. Asp300 provides a ligand contact to Fe cation.

The protein belongs to the KAE1 / TsaD family. It depends on Fe(2+) as a cofactor.

Its subcellular location is the cytoplasm. The catalysed reaction is L-threonylcarbamoyladenylate + adenosine(37) in tRNA = N(6)-L-threonylcarbamoyladenosine(37) in tRNA + AMP + H(+). Its function is as follows. Required for the formation of a threonylcarbamoyl group on adenosine at position 37 (t(6)A37) in tRNAs that read codons beginning with adenine. Is involved in the transfer of the threonylcarbamoyl moiety of threonylcarbamoyl-AMP (TC-AMP) to the N6 group of A37, together with TsaE and TsaB. TsaD likely plays a direct catalytic role in this reaction. The chain is tRNA N6-adenosine threonylcarbamoyltransferase from Salmonella arizonae (strain ATCC BAA-731 / CDC346-86 / RSK2980).